The primary structure comprises 605 residues: DNA mismatch repair protein MutL (605 aa).

It belongs to the DNA mismatch repair MutL/HexB family.

Functionally, this protein is involved in the repair of mismatches in DNA. It is required for dam-dependent methyl-directed DNA mismatch repair. May act as a 'molecular matchmaker', a protein that promotes the formation of a stable complex between two or more DNA-binding proteins in an ATP-dependent manner without itself being part of a final effector complex. The protein is DNA mismatch repair protein MutL of Pelotomaculum thermopropionicum (strain DSM 13744 / JCM 10971 / SI).